The chain runs to 478 residues: Sulfate adenylyltransferase subunit 1 (478 aa).

Residues 28-244 (KTMLRFLTCG…LESVDVVNAR (217 aa)) enclose the tr-type G domain. Residues 37–44 (GSVDDGKS) are G1. 37–44 (GSVDDGKS) contributes to the GTP binding site. The tract at residues 95–99 (GITID) is G2. Positions 116–119 (DTPG) are G3. GTP contacts are provided by residues 116–120 (DTPGH) and 171–174 (NKMD). The interval 171–174 (NKMD) is G4. A G5 region spans residues 209-211 (SAL).

It belongs to the TRAFAC class translation factor GTPase superfamily. Classic translation factor GTPase family. CysN/NodQ subfamily. Heterodimer composed of CysD, the smaller subunit, and CysN.

The catalysed reaction is sulfate + ATP + H(+) = adenosine 5'-phosphosulfate + diphosphate. It participates in sulfur metabolism; hydrogen sulfide biosynthesis; sulfite from sulfate: step 1/3. With CysD forms the ATP sulfurylase (ATPS) that catalyzes the adenylation of sulfate producing adenosine 5'-phosphosulfate (APS) and diphosphate, the first enzymatic step in sulfur assimilation pathway. APS synthesis involves the formation of a high-energy phosphoric-sulfuric acid anhydride bond driven by GTP hydrolysis by CysN coupled to ATP hydrolysis by CysD. The chain is Sulfate adenylyltransferase subunit 1 from Yersinia pseudotuberculosis serotype O:1b (strain IP 31758).